We begin with the raw amino-acid sequence, 76 residues long: Small ribosomal subunit protein bS18 (76 aa).

The protein belongs to the bacterial ribosomal protein bS18 family. As to quaternary structure, part of the 30S ribosomal subunit. Forms a tight heterodimer with protein bS6.

In terms of biological role, binds as a heterodimer with protein bS6 to the central domain of the 16S rRNA, where it helps stabilize the platform of the 30S subunit. The polypeptide is Small ribosomal subunit protein bS18 (Alcanivorax borkumensis (strain ATCC 700651 / DSM 11573 / NCIMB 13689 / SK2)).